Consider the following 209-residue polypeptide: Outer-membrane lipoprotein LolB (209 aa).

The N-terminal stretch at 1–21 is a signal peptide; that stretch reads MNNMKTFKFLTALFATAILTA. A lipid anchor (N-palmitoyl cysteine) is attached at Cys-22. A lipid anchor (S-diacylglycerol cysteine) is attached at Cys-22.

Belongs to the LolB family. In terms of assembly, monomer.

Its subcellular location is the cell outer membrane. In terms of biological role, plays a critical role in the incorporation of lipoproteins in the outer membrane after they are released by the LolA protein. The chain is Outer-membrane lipoprotein LolB from Haemophilus influenzae (strain 86-028NP).